We begin with the raw amino-acid sequence, 304 residues long: Transcription factor bHLH94 (304 aa).

Positions 86–107 (VESHPPPQHRRKRRRTRNCKNK) are disordered. Over residues 92–104 (PQHRRKRRRTRNC) the composition is skewed to basic residues. One can recognise a bHLH domain in the interval 112–163 (NQRMTHIAVERNRRKQMNEYLAVLRSLMPSSYAQRGDQASIVGGAINYVKEL).

Homodimer. In terms of tissue distribution, expressed constitutively in roots, leaves, stems, and flowers.

It is found in the nucleus. This Arabidopsis thaliana (Mouse-ear cress) protein is Transcription factor bHLH94 (BHLH94).